Here is a 537-residue protein sequence, read N- to C-terminus: ATP-dependent 6-phosphofructokinase 5, chloroplastic (537 aa).

The transit peptide at 1 to 52 (MDALSQAISSGISVPYKNNSSSLVPSHGLTSLILRKSRSPVNPSSRSRVSVR) directs the protein to the chloroplast. Residues 35–64 (RKSRSPVNPSSRSRVSVRASEIQHSKTSAS) are disordered. The segment covering 39-54 (SPVNPSSRSRVSVRAS) has biased composition (low complexity). Ser147 bears the Phosphoserine mark. ATP is bound by residues Gly189, 253 to 254 (RG), and 278 to 281 (GNGT). Mg(2+) is bound at residue Asn279. Substrate contacts are provided by residues 307 to 309 (TID), 352 to 354 (MGR), Glu408, and 460 to 463 (YMIR). The active-site Proton acceptor is the Asp309.

The protein belongs to the phosphofructokinase type A (PFKA) family. PPi-dependent PFK group II subfamily. Atypical ATP-dependent clade 'X' sub-subfamily. As to quaternary structure, homotetramer. Mg(2+) is required as a cofactor. In terms of tissue distribution, expressed in roots, leaves, stems and flowers.

The protein resides in the plastid. The protein localises to the chloroplast. The catalysed reaction is beta-D-fructose 6-phosphate + ATP = beta-D-fructose 1,6-bisphosphate + ADP + H(+). It participates in carbohydrate degradation; glycolysis; D-glyceraldehyde 3-phosphate and glycerone phosphate from D-glucose: step 3/4. Allosterically activated by AMP. Its function is as follows. Catalyzes the phosphorylation of D-fructose 6-phosphate to fructose 1,6-bisphosphate by ATP, the first committing step of glycolysis. The protein is ATP-dependent 6-phosphofructokinase 5, chloroplastic of Arabidopsis thaliana (Mouse-ear cress).